Consider the following 136-residue polypeptide: Small ribosomal subunit protein uS9 (136 aa).

The protein belongs to the universal ribosomal protein uS9 family.

The chain is Small ribosomal subunit protein uS9 from Synechococcus sp. (strain JA-2-3B'a(2-13)) (Cyanobacteria bacterium Yellowstone B-Prime).